A 308-amino-acid chain; its full sequence is Aspartate carbamoyltransferase catalytic subunit (308 aa).

Carbamoyl phosphate-binding residues include arginine 55 and threonine 56. Lysine 83 is a binding site for L-aspartate. Positions 105, 133, and 136 each coordinate carbamoyl phosphate. 2 residues coordinate L-aspartate: arginine 166 and arginine 223. Carbamoyl phosphate is bound by residues glycine 264 and proline 265.

The protein belongs to the aspartate/ornithine carbamoyltransferase superfamily. ATCase family. As to quaternary structure, heterododecamer (2C3:3R2) of six catalytic PyrB chains organized as two trimers (C3), and six regulatory PyrI chains organized as three dimers (R2).

The catalysed reaction is carbamoyl phosphate + L-aspartate = N-carbamoyl-L-aspartate + phosphate + H(+). Its pathway is pyrimidine metabolism; UMP biosynthesis via de novo pathway; (S)-dihydroorotate from bicarbonate: step 2/3. Functionally, catalyzes the condensation of carbamoyl phosphate and aspartate to form carbamoyl aspartate and inorganic phosphate, the committed step in the de novo pyrimidine nucleotide biosynthesis pathway. This Salinispora arenicola (strain CNS-205) protein is Aspartate carbamoyltransferase catalytic subunit.